A 107-amino-acid polypeptide reads, in one-letter code: Ig kappa chain V-VI region TEPC 601/TEPC 191 (107 aa).

A framework-1 region spans residues 1 to 23 (EIVLTQSPAITAASLGQKVTITC). The cysteines at positions 23 and 87 are disulfide-linked. Positions 24-33 (SASSSVSYMH) are complementarity-determining-1. The framework-2 stretch occupies residues 34–48 (WYQQKSGTSPKPWIY). The interval 49 to 55 (EISKLAS) is complementarity-determining-2. Positions 56–87 (GVPARFSGSGSGTSYSLTISSMEAEDAAIYYC) are framework-3. The tract at residues 88–96 (QQWNYPLIT) is complementarity-determining-3. Residues 97–106 (FGAGTKLELK) are framework-4.

In Mus musculus (Mouse), this protein is Ig kappa chain V-VI region TEPC 601/TEPC 191.